The chain runs to 382 residues: Intermediate transcription factor 3 large subunit (382 aa).

The protein belongs to the poxviruses A23 family. Heterodimer of a 45 kDa and a 32 kDa subunit.

Its function is as follows. Acts with RNA polymerase to initiate transcription from intermediate gene promoters. This chain is Intermediate transcription factor 3 large subunit (VITF3L), found in Ectromelia virus (strain Moscow) (ECTV).